Reading from the N-terminus, the 138-residue chain is ATP synthase epsilon chain (138 aa).

It belongs to the ATPase epsilon chain family. F-type ATPases have 2 components, CF(1) - the catalytic core - and CF(0) - the membrane proton channel. CF(1) has five subunits: alpha(3), beta(3), gamma(1), delta(1), epsilon(1). CF(0) has three main subunits: a, b and c.

The protein resides in the cell inner membrane. Functionally, produces ATP from ADP in the presence of a proton gradient across the membrane. In Geotalea uraniireducens (strain Rf4) (Geobacter uraniireducens), this protein is ATP synthase epsilon chain.